Reading from the N-terminus, the 132-residue chain is MAEFVEADNAEAIIARIETKSRKIESLLKQYKHVEALKTALEGSPPKTRDERCKSANWIVVHRALMAIKDIDGMLNALDVEYYDILMKYLYRGLSTGDRPTCDQCLKIHEKLTERAGLGCILRCLTDTINTV.

Residue Ala2 is modified to N-acetylalanine.

This sequence belongs to the ARPC5 family. As to quaternary structure, component of the Arp2/3 complex composed of ARP2, ARP3, ARPC1/p41-ARC, ARPC2/p34-ARC, ARPC3/p21-ARC, ARPC4/p20-ARC and ARPC5/p16-ARC. As to expression, expressed at low levels in all tissues with a relatively highest expression in inflorescences.

The protein resides in the cytoplasm. Its subcellular location is the cytoskeleton. The protein localises to the cell projection. In terms of biological role, functions as a component of the Arp2/3 complex which is involved in regulation of actin polymerization and together with an activating nucleation-promoting factor (NPF) mediates the formation of branched actin networks. Arp2/3 complex plays a critical role in the control of cell morphogenesis via the modulation of cell polarity development. The sequence is that of Actin-related protein 2/3 complex subunit 5A (ARPC5A) from Arabidopsis thaliana (Mouse-ear cress).